Reading from the N-terminus, the 61-residue chain is Small ribosomal subunit protein uS14 (61 aa).

4 residues coordinate Zn(2+): C24, C27, C40, and C43.

This sequence belongs to the universal ribosomal protein uS14 family. Zinc-binding uS14 subfamily. Part of the 30S ribosomal subunit. Contacts proteins S3 and S10. The cofactor is Zn(2+).

In terms of biological role, binds 16S rRNA, required for the assembly of 30S particles and may also be responsible for determining the conformation of the 16S rRNA at the A site. The chain is Small ribosomal subunit protein uS14 from Clostridioides difficile (strain 630) (Peptoclostridium difficile).